A 264-amino-acid polypeptide reads, in one-letter code: Endoglucanase S (264 aa).

An N-terminal signal peptide occupies residues 1–32 (MQTVNTQPHRIFRVLLPAVFSSLLLSSLTVSA).

This sequence belongs to the glycosyl hydrolase 12 (cellulase H) family.

The enzyme catalyses Endohydrolysis of (1-&gt;4)-beta-D-glucosidic linkages in cellulose, lichenin and cereal beta-D-glucans.. This is Endoglucanase S (celS) from Pectobacterium parmentieri.